The primary structure comprises 214 residues: Charged multivesicular body protein 2b (214 aa).

Residues 16–55 (EQNKELRGTQRAITRDRAALEKQEKQLEMEIKKMAKAGNK) adopt a coiled-coil conformation. The disordered stretch occupies residues 178–203 (MAKAPSAAKGLPSTSASKSSGISDEE). Residues 189–199 (PSTSASKSSGI) are compositionally biased toward polar residues. The MIT-interacting motif signature appears at 202 to 212 (EEIERQLKALG).

This sequence belongs to the SNF7 family. As to quaternary structure, probable core component of the endosomal sorting required for transport complex III (ESCRT-III). ESCRT-III components are thought to multimerize to form a flat lattice on the perimeter membrane of the endosome.

It is found in the cytoplasm. Its subcellular location is the cytosol. It localises to the late endosome membrane. Functionally, probable core component of the endosomal sorting required for transport complex III (ESCRT-III) which is involved in multivesicular bodies (MVBs) formation and sorting of endosomal cargo proteins into MVBs. MVBs contain intraluminal vesicles (ILVs) that are generated by invagination and scission from the limiting membrane of the endosome and mostly are delivered to lysosomes enabling degradation of membrane proteins, such as stimulated growth factor receptors, lysosomal enzymes and lipids. In Xenopus tropicalis (Western clawed frog), this protein is Charged multivesicular body protein 2b (chmp2b).